We begin with the raw amino-acid sequence, 108 residues long: Structural protein 1 (108 aa).

Residues 1-20 (MSRVSEYGVPEGVRESDSDT) form a disordered region. Topologically, residues 1–77 (MSRVSEYGVP…LKMQMDRLCN (77 aa)) are intravirion. Residues 78 to 98 (VLGVVLQMATLALVTYIAFVV) form a helical; Signal-anchor for type II membrane protein membrane-spanning segment. The Virion surface segment spans residues 99–108 (HTRATSCKRE).

This sequence belongs to the varicellovirus ORF1 protein family. As to quaternary structure, homodimer. Post-translationally, phosphorylated.

It localises to the virion membrane. It is found in the host Golgi apparatus membrane. The chain is Structural protein 1 from Varicella-zoster virus (strain Dumas) (HHV-3).